Here is a 277-residue protein sequence, read N- to C-terminus: Protein HEAT-INDUCED TAS1 TARGET 1 (277 aa).

The protein belongs to the heat induced plant HTT protein family. As to quaternary structure, interacts with the heat shock proteins HSP70-14 and At2g33735/HSP40, and with NFYC2 in both cytoplasm and nucleus. As to expression, expressed ubiquitously, including in seedlings, leaves, stems, inflorescences and siliques.

The protein resides in the cytoplasm. It is found in the nucleus. Mediates both basal and acquired thermotolerance via HSFA1s-directed pathways (e.g. HSFA1A, HSFA1B, and HSFA1D). Triggers the expression of HSFA1A and HSFA1B. This Arabidopsis thaliana (Mouse-ear cress) protein is Protein HEAT-INDUCED TAS1 TARGET 1.